The chain runs to 389 residues: Na(+)/H(+) antiporter NhaA 1 (389 aa).

11 helical membrane passes run Val12 to Val32, Phe62 to Leu82, Ile97 to Leu117, Gly128 to Gly148, Ile157 to Phe177, Ile184 to Gly204, Ile220 to Ile240, Phe260 to Ser280, Ile282 to Gly302, Leu331 to Leu351, and Leu365 to Phe385.

The protein belongs to the NhaA Na(+)/H(+) (TC 2.A.33) antiporter family.

The protein resides in the cell inner membrane. The catalysed reaction is Na(+)(in) + 2 H(+)(out) = Na(+)(out) + 2 H(+)(in). Its function is as follows. Na(+)/H(+) antiporter that extrudes sodium in exchange for external protons. The chain is Na(+)/H(+) antiporter NhaA 1 from Campylobacter jejuni subsp. jejuni serotype O:2 (strain ATCC 700819 / NCTC 11168).